The sequence spans 473 residues: MIDVIIAGGGPTGLMLAGELRLHGVRTVVLEKEPTPNQHSRSRGLHARSIEVMDQRGLLERFLAHGEQFRVGGFFAGLAAEWPADLDTAHSYVLAIPQVVTERLLTEHATELGAEIRRGCEVAGLDQDADGVTAELADGTRLRARYLVGCDGGRSTVRRLLGVDFPGEPTRVETLLADVRIDVPVETLTAVVAEVRKTQLRFGAVPAGDGFFRLIVPAQGLSADRAAPTLDELKRCLHATAGTDFGVHSPRWLSRFGDATRLAERYRTGRVLLAGDAAHIHPPTGGQGLNLGIQDAFNLGWKLAAAIGGWAPPDLLDSYHDERHPVAAEVLDNTRAQMTLLSLDPGPRAVRRLMAELVEFPDVNRHLIEKITAIAVRYDLGDGHDLVGRRLRDIPLTEGRLYERMRGGRGLLLDRTGRLSVSGWSDRVDHLADPGAALDVPAALLRPDGHVAWVGEDQDDLLAHLPRWFGAAT.

FAD contacts are provided by threonine 12, glutamate 31, lysine 32, and arginine 41. Arginine 43 contacts rifampicin. The FAD site is built by glutamine 98, valine 122, and threonine 156. Arginine 196 serves as a coordination point for rifampicin. An FAD-binding site is contributed by aspartate 276. Glycine 285 contacts rifampicin. The FAD site is built by leucine 289 and asparagine 290.

The protein belongs to the rifampicin monooxygenase family. As to quaternary structure, homodimer. Requires FAD as cofactor.

The enzyme catalyses rifampicin + NADPH + O2 = rifampicin para-naphthoquinone carboxamide + NADP(+) + H2O + H(+). The catalysed reaction is rifampicin + NADH + O2 = rifampicin para-naphthoquinone carboxamide + NAD(+) + H2O + H(+). In terms of biological role, monooxygenase that can modify rifampicin, thereby inactivating its antibiotic activity. It constitutes a secondary rifampicin resistance factor. In Nocardia farcinica (strain IFM 10152), this protein is Rifampicin monooxygenase.